A 236-amino-acid polypeptide reads, in one-letter code: LexA repressor (236 aa).

Residues 1 to 25 (MNDSNDTSVAGGAAGADSRVLSADS) are disordered. The H-T-H motif DNA-binding region spans 51–71 (IREIGDAVGLTSTSSVAHQLR). Active-site for autocatalytic cleavage activity residues include Ser160 and Lys197.

It belongs to the peptidase S24 family. In terms of assembly, homodimer.

It carries out the reaction Hydrolysis of Ala-|-Gly bond in repressor LexA.. Functionally, represses a number of genes involved in the response to DNA damage (SOS response), including recA and lexA. In the presence of single-stranded DNA, RecA interacts with LexA causing an autocatalytic cleavage which disrupts the DNA-binding part of LexA, leading to derepression of the SOS regulon and eventually DNA repair. The chain is LexA repressor from Mycobacterium tuberculosis (strain ATCC 25177 / H37Ra).